We begin with the raw amino-acid sequence, 92 residues long: Large ribosomal subunit protein eL43z (92 aa).

A C4-type zinc finger spans residues 39–60 (CEFCGKFAVKRKAVGIWGCKDC).

Belongs to the eukaryotic ribosomal protein eL43 family.

In Oryza sativa subsp. japonica (Rice), this protein is Large ribosomal subunit protein eL43z.